The primary structure comprises 124 residues: Glycine cleavage system H protein (124 aa).

Positions 22–104 (VATVGITEFA…YGAGWLFRVE (83 aa)) constitute a Lipoyl-binding domain. Lys-63 carries the post-translational modification N6-lipoyllysine.

This sequence belongs to the GcvH family. As to quaternary structure, the glycine cleavage system is composed of four proteins: P, T, L and H. The cofactor is (R)-lipoate.

In terms of biological role, the glycine cleavage system catalyzes the degradation of glycine. The H protein shuttles the methylamine group of glycine from the P protein to the T protein. The polypeptide is Glycine cleavage system H protein (Beutenbergia cavernae (strain ATCC BAA-8 / DSM 12333 / CCUG 43141 / JCM 11478 / NBRC 16432 / NCIMB 13614 / HKI 0122)).